The following is a 412-amino-acid chain: MAGKAAAPGTAVLLVTANVGSLFDDPENLQKNWLREFYQVVHTHKPHFMALHCQEFGGKNYEASMSHVDKFVKELLSSDAMKEYNRARVYLDENYKSQEHFTALGSFYFLHESLKNIYQFDFKAKKYRKVAGKEIYSDTLESTPMLEKEKFPQDYFPECKWSRKGFIRTRWCIADCAFDLVNIHLFHDASNLVAWETSPSVYSGIRHKALGYVLDRIIDQRFEKVSYFVFGDFNFRLDSKSVVETLCTKATMQTVRAADTNEVVKLIFRESDNDRKVMLQLEKKLFDYFNQEVFRDNNGTALLEFDKELSVFKDRLYELDISFPPSYPYSEDARQGEQYMNTRCPAWCDRILMSPSAKELVLRSESEEKVVTYDHIGPNVCMGDHKPVFLAFRIMPGAGKPHAHVHKCCVVQ.

Cysteine 409 is lipidated: S-farnesyl cysteine. The propeptide at 410-412 (VVQ) is removed in mature form.

This sequence belongs to the inositol 1,4,5-trisphosphate 5-phosphatase type I family. As to quaternary structure, interacts with TASOR. Post-translationally, isoprenylation at Cys-409 is required for localization at the membrane. As to expression, predominantly expressed in heart, brain, and skeletal muscle. In brain; high level in Purkinje cells.

The protein resides in the cell membrane. It is found in the cell projection. It localises to the dendrite. The enzyme catalyses 1D-myo-inositol 1,4,5-trisphosphate + H2O = 1D-myo-inositol 1,4-bisphosphate + phosphate. It catalyses the reaction 1D-myo-inositol 1,3,4,5-tetrakisphosphate + H2O = 1D-myo-inositol 1,3,4-trisphosphate + phosphate. Phosphatase that specifically hydrolyzes the 5-phosphate of inositol 1,4,5-trisphosphate to inositol 1,4-bisphosphate, and inositol 1,3,4,5-tetrasphosphate to inositol 1,3,4-trisphosphate. Plays a crucial role in the survival of cerebellar Purkinje cells. The polypeptide is Inositol polyphosphate-5-phosphatase A (Homo sapiens (Human)).